The chain runs to 300 residues: UDP-N-acetylenolpyruvoylglucosamine reductase (300 aa).

In terms of domain architecture, FAD-binding PCMH-type spans 27 to 192; that stretch reads KVGGPADYLA…ISAKFALKPG (166 aa). Arginine 171 is an active-site residue. Serine 221 acts as the Proton donor in catalysis. Glutamate 291 is a catalytic residue.

The protein belongs to the MurB family. It depends on FAD as a cofactor.

It localises to the cytoplasm. The enzyme catalyses UDP-N-acetyl-alpha-D-muramate + NADP(+) = UDP-N-acetyl-3-O-(1-carboxyvinyl)-alpha-D-glucosamine + NADPH + H(+). Its pathway is cell wall biogenesis; peptidoglycan biosynthesis. Cell wall formation. In Streptococcus agalactiae serotype Ia (strain ATCC 27591 / A909 / CDC SS700), this protein is UDP-N-acetylenolpyruvoylglucosamine reductase.